Here is a 233-residue protein sequence, read N- to C-terminus: Orotidine 5'-phosphate decarboxylase (233 aa).

Substrate is bound by residues D13, K35, 62–71 (DLKFHDIPNT), T122, R182, Q191, G211, and R212. K64 serves as the catalytic Proton donor.

The protein belongs to the OMP decarboxylase family. Type 1 subfamily. In terms of assembly, homodimer.

It carries out the reaction orotidine 5'-phosphate + H(+) = UMP + CO2. It participates in pyrimidine metabolism; UMP biosynthesis via de novo pathway; UMP from orotate: step 2/2. Its function is as follows. Catalyzes the decarboxylation of orotidine 5'-monophosphate (OMP) to uridine 5'-monophosphate (UMP). The sequence is that of Orotidine 5'-phosphate decarboxylase from Pseudomonas putida (strain ATCC 47054 / DSM 6125 / CFBP 8728 / NCIMB 11950 / KT2440).